The sequence spans 546 residues: Cytochrome P450 monooxygenase fumoB (546 aa).

Residues 13–33 (LGYYEKLAGILGIIGLVLLFW) traverse the membrane as a helical segment. An N-linked (GlcNAc...) asparagine glycan is attached at N147. A heme-binding site is contributed by C488.

Belongs to the cytochrome P450 family. It depends on heme as a cofactor.

It localises to the membrane. It functions in the pathway secondary metabolite biosynthesis. In terms of biological role, cytochrome P450 monooxygenase; part of the gene cluster that mediates the biosynthesis of fumosorinone, a 2-pyridone alkaloid that acts as an inhibitor of protein tyrosine phosphatase 1B which is implicated asa negative regulator of insulin receptor signaling and a potential drug target for the treatment of type II diabetes and other associated metabolic syndromes. The polyketide-amino acid backbone of fumosorinone is first assembled by the PKS-NRPS hybrid fumoS. The PKS modules condense one acetyl-CoA starter unit with 7 malonyl-CoA units, programmed C-methylations occurring after the first 3 and the sixth extensions, and cycles of full reduction occurring after the first 2 extensions. Because fumoS lacks a designated enoyl reductase (ER) domain, the required activity is provided the enoyl reductase fumoC. Upon formation of the polyketide backbone on the thiotemplate, the polyketide is transferred to the NRPS module and linked to tyrosine to produce the acyltetramic acid intermediate called prefumosorinone A. The cytochrome P450 monooxygenase fumoA then probably catalyzes an unprecedented oxidative ring expansion of prefumosorinone A to form prefumosorinone B which contains the 2-pyridone core of fumosorinone. The cytochrome P450 monooxygenase fumoB might hydroxylate the nitrogen of prefumosorinone B, but not the acyltetramic acid prefumosorinone A, to form fumosorinone. The chain is Cytochrome P450 monooxygenase fumoB from Cordyceps fumosorosea (strain ARSEF 2679) (Isaria fumosorosea).